The chain runs to 115 residues: Translation initiation factor 1A 2 (115 aa).

The segment at 1–34 (MANYRSTIRHRNSGSRKSVSGDTHEVTRVRTPQK) is disordered. The segment covering 22 to 34 (DTHEVTRVRTPQK) has biased composition (basic and acidic residues). The 75-residue stretch at 27–101 (TRVRTPQKDR…SKADVTWKYT (75 aa)) folds into the S1-like domain.

It belongs to the eIF-1A family.

Functionally, seems to be required for maximal rate of protein biosynthesis. Enhances ribosome dissociation into subunits and stabilizes the binding of the initiator Met-tRNA(I) to 40 S ribosomal subunits. In Methanosarcina barkeri (strain Fusaro / DSM 804), this protein is Translation initiation factor 1A 2.